The primary structure comprises 915 residues: Metabotropic glutamate receptor 7 (915 aa).

A signal peptide spans M1–G34. Residues Q35–W590 are Extracellular-facing. An intrachain disulfide couples C67 to C109. Residue N98 is glycosylated (N-linked (GlcNAc...) asparagine). Residues S159, A180–T182, Y230, and D314 each bind L-glutamate. Disulfide bonds link C249–C541, C374–C390, C430–C437, C523–C542, C527–C545, C548–C560, and C563–C576. K407 is an L-glutamate binding site. Residues N458 and N486 are each glycosylated (N-linked (GlcNAc...) asparagine). N572 carries N-linked (GlcNAc...) asparagine glycosylation. The helical transmembrane segment at A591 to Y615 threads the bilayer. Topologically, residues N616–E627 are cytoplasmic. The helical transmembrane segment at L628–A648 threads the bilayer. Topologically, residues K649–V654 are extracellular. Residues C655–T675 traverse the membrane as a helical segment. At K676–Q702 the chain is on the cytoplasmic side. The helical transmembrane segment at L703 to V723 threads the bilayer. The Extracellular segment spans residues D724–D753. A helical transmembrane segment spans residues L754–I775. Over K776 to K788 the chain is Cytoplasmic. A helical transmembrane segment spans residues P789–G810. Residues T811–L825 lie on the Extracellular side of the membrane. A helical transmembrane segment spans residues T826–F850. The Cytoplasmic segment spans residues H851–I915. The disordered stretch occupies residues S874–N895. Basic and acidic residues predominate over residues K879–L892. Phosphoserine is present on S900.

It belongs to the G-protein coupled receptor 3 family. In terms of assembly, homodimer. Interacts with PICK1. In terms of tissue distribution, widely distributed throughout the brain.

It localises to the cell membrane. Functionally, G-protein coupled receptor activated by glutamate that regulates axon outgrowth through the MAPK-cAMP-PKA signaling pathway during neuronal development. Ligand binding causes a conformation change that triggers signaling via guanine nucleotide-binding proteins (G proteins) and modulates the activity of downstream effectors, such as adenylate cyclase that it inhibits. The chain is Metabotropic glutamate receptor 7 (Grm7) from Rattus norvegicus (Rat).